The chain runs to 530 residues: Glucocorticoid modulatory element-binding protein 2 (530 aa).

The SAND domain occupies 81–163 (EEGENLEAEI…RKIMDSGELD (83 aa)). Residue cysteine 110 coordinates Zn(2+). The DNA site is built by lysine 136, lysine 140, lysine 143, and arginine 154. A Glycyl lysine isopeptide (Lys-Gly) (interchain with G-Cter in SUMO1); alternate cross-link involves residue lysine 155. Lysine 155 is covalently cross-linked (Glycyl lysine isopeptide (Lys-Gly) (interchain with G-Cter in SUMO2); alternate). Residues histidine 167, cysteine 171, and cysteine 175 each coordinate Zn(2+). Positions 304 to 348 (QMDRSREQYARDLAALEQQCDEHRRRAKELKHKSQHLSNVLMTLT) form a coiled coil. At serine 373 the chain carries Phosphoserine.

As to quaternary structure, homodimer, and heterodimer of GMEB1 and GMEB2. GMEB1 and GMEB2 form the parvovirus initiator complex (PIF). Interacts with the glucocorticoid receptor (NR3C1). May interact with CREB-binding protein (CBP). As to expression, expressed in peripheral blood lymphocytes and fetal liver. Expressed preferentially in reproductive and/or developmentally important cells, such as testis, placenta, bone marrow and fetal tissues.

Its subcellular location is the nucleus. The protein resides in the cytoplasm. Functionally, trans-acting factor that binds to glucocorticoid modulatory elements (GME) present in the TAT (tyrosine aminotransferase) promoter and increases sensitivity to low concentrations of glucocorticoids. Also binds to the transferrin receptor promoter. Essential auxiliary factor for the replication of parvoviruses. The polypeptide is Glucocorticoid modulatory element-binding protein 2 (GMEB2) (Homo sapiens (Human)).